Reading from the N-terminus, the 26-residue chain is Mu-theraphotoxin-Phlo2a (26 aa).

3 disulfide bridges follow: cysteine 2–cysteine 16, cysteine 9–cysteine 21, and cysteine 15–cysteine 25.

This sequence belongs to the neurotoxin 30 (phrixotoxin) family. As to expression, expressed by the venom gland.

The protein localises to the secreted. Functionally, gating-modifier toxin that non-selectively inhibits voltage-gated sodium channel Nav by shifting the threshold for channel activation to more positive potentials. This toxin moderately inhibits human Nav1.2/SCN2A (IC(50)=404 nM), Nav1.5/SCN5A (IC(50)=218 nM) and Nav1.7/SCN9A (IC(50)=333 nM). Inhibition of Nav1.7 is voltage-dependent, with lower inhibition at more positive test pulses. The protein is Mu-theraphotoxin-Phlo2a of Phlogius sp. (Tarantula spider).